We begin with the raw amino-acid sequence, 79 residues long: RNA-binding protein KhpA (79 aa).

The region spanning 32 to 79 (FLEYHLNLDQSDVGRVIGRKGRTISAIRTIVYSVPTEYKKVRIVIDEK) is the KH domain.

Belongs to the KhpA RNA-binding protein family. As to quaternary structure, forms a complex with KhpB. KhpA and KhpB colocalize throughout the cell cycle, with some increase at midcell in dividing cells.

Its subcellular location is the cytoplasm. In terms of biological role, a probable RNA chaperone. Forms a complex with KhpB which presumably binds to about 170 cellular RNAs (mRNA, tRNA intergenic RNA and sRNAs); the proteins alone each bind the same set of RNAs. A mutation in this gene suppresses the requirement for PBP2b (penA, a transpeptidase) in peripheral peptidoglycan (PG) synthesis. Probably plays a role in PG homeostasis and regulating peripheral PG synthesis. The chain is RNA-binding protein KhpA from Streptococcus pneumoniae serotype 2 (strain D39 / NCTC 7466).